Here is a 161-residue protein sequence, read N- to C-terminus: Glycine cleavage system H protein 2 (161 aa).

A Lipoyl-binding domain is found at 34–116 (TVTVGVTDIG…YGEGWIAKLK (83 aa)). At K75 the chain carries N6-lipoyllysine.

It belongs to the GcvH family. As to quaternary structure, the glycine cleavage system is composed of four proteins: P, T, L and H. The cofactor is (R)-lipoate.

In terms of biological role, the glycine cleavage system catalyzes the degradation of glycine. The H protein shuttles the methylamine group of glycine from the P protein to the T protein. The chain is Glycine cleavage system H protein 2 from Aquifex aeolicus (strain VF5).